We begin with the raw amino-acid sequence, 377 residues long: All-trans-retinol dehydrogenase [NAD(+)] ADH4 (377 aa).

Residue C47 participates in Zn(2+) binding. T49 provides a ligand contact to NAD(+). Zn(2+) is bound by residues H68, C98, C101, C104, C112, and C179. Residues 204 to 209 (GLGCVG), D228, K233, 297 to 299 (VGA), 320 to 322 (TFF), and R372 each bind NAD(+).

It belongs to the zinc-containing alcohol dehydrogenase family. Class-II subfamily. In terms of assembly, dimer. Zn(2+) serves as cofactor. In terms of tissue distribution, liver specific.

The protein resides in the cytoplasm. The enzyme catalyses all-trans-retinol + NAD(+) = all-trans-retinal + NADH + H(+). It catalyses the reaction 9-cis-retinol + NAD(+) = 9-cis-retinal + NADH + H(+). The catalysed reaction is 20-hydroxy-(5Z,8Z,11Z,14Z)-eicosatetraenoate + NAD(+) = 20-oxo-(5Z,8Z,11Z,14Z)-eicosatetraenoate + NADH + H(+). It carries out the reaction 20-oxo-(5Z,8Z,11Z,14Z)-eicosatetraenoate + NAD(+) + H2O = (5Z,8Z,11Z,14Z)-eicosatetraenedioate + NADH + 2 H(+). The enzyme catalyses 1,4-benzoquinone + NADH + H(+) = hydroquinone + NAD(+). Its activity is regulated as follows. Oxidation of 20-HETE is inhibited by low concentrations of N-heptylformamide. Oxidation of 20-HETE is a decreased by 55-65% by either all-trans-retinol or all-trans-retinoic acid. Strongly inhibited by omega-hydroxy fatty acids. Catalyzes the NAD-dependent oxidation of either all-trans-retinol or 9-cis-retinol. Also oxidizes long chain omega-hydroxy fatty acids, such as 20-HETE, producing both the intermediate aldehyde, 20-oxoarachidonate and the end product, a dicarboxylic acid, (5Z,8Z,11Z,14Z)-eicosatetraenedioate. Also catalyzes the reduction of benzoquinones. This is All-trans-retinol dehydrogenase [NAD(+)] ADH4 from Mus musculus (Mouse).